The chain runs to 425 residues: MNIISVGVNHKTAPIEIRERISLSEVQNKEFITGLISGGLAHEAMVLSTCNRTELYVVPAMHEVTGEYLKDYIISFRDARKDVRPEHFFSRFYCGTARHLFEVSSAIDSLILGEGQILGQVKEAYRIAAEVQAAGILITRLCHTAFSVAKKVKTKTKIMEGAVSVSYAAVELAQKIFSNLSMKKILLVGAGETGELAAKHMFAKNARNIVITNRTQSKAEALAEELGTNRVLPFESYKEHLHEFDIIITAVSTKDYIITEADMHGAMQKRRLKPVIILDLGLPRNADPEIGKLQNMFLKDIDALKHIIDKNLERRSLELPKVHSIIDEELVAFGQWINTLKVRPTIVDLQSKFIEIKEKELERYRYKVSEEELRRMEHLTDRIMKKILHHPIKMLKAPISTSDNMPSRVDLVRNVFDLEEPNQSH.

Substrate-binding positions include 49-52 (TCNR), serine 109, 114-116 (EGQ), and glutamine 120. The active-site Nucleophile is the cysteine 50. 189–194 (GAGETG) contributes to the NADP(+) binding site.

Belongs to the glutamyl-tRNA reductase family. Homodimer.

The enzyme catalyses (S)-4-amino-5-oxopentanoate + tRNA(Glu) + NADP(+) = L-glutamyl-tRNA(Glu) + NADPH + H(+). It functions in the pathway porphyrin-containing compound metabolism; protoporphyrin-IX biosynthesis; 5-aminolevulinate from L-glutamyl-tRNA(Glu): step 1/2. It participates in porphyrin-containing compound metabolism; chlorophyll biosynthesis. Functionally, catalyzes the NADPH-dependent reduction of glutamyl-tRNA(Glu) to glutamate 1-semialdehyde (GSA). The polypeptide is Glutamyl-tRNA reductase (Chlorobium luteolum (strain DSM 273 / BCRC 81028 / 2530) (Pelodictyon luteolum)).